Consider the following 110-residue polypeptide: Parvalbumin alpha (110 aa).

Serine 2 carries the N-acetylserine modification. A phosphoserine mark is found at serine 2 and serine 24. 2 consecutive EF-hand domains span residues 39–74 (KSADDVKKVFHMLDKDKSGFIEEDELGFILKGFSPD) and 78–110 (LSAKETKMLMAAGDKDGDGKIGVDEFSTLVAES). Residues aspartate 52, aspartate 54, serine 56, phenylalanine 58, glutamate 60, glutamate 63, aspartate 91, aspartate 93, aspartate 95, lysine 97, and glutamate 102 each contribute to the Ca(2+) site.

In muscle, parvalbumin is thought to be involved in relaxation after contraction. It binds two calcium ions. This is Parvalbumin alpha (PVALB) from Homo sapiens (Human).